A 468-amino-acid polypeptide reads, in one-letter code: Squamosa promoter-binding-like protein 5 (468 aa).

Residues P204–P281 form an SBP-type zinc finger. C207, C212, C229, H232, C248, C251, H255, and C267 together coordinate Zn(2+). Residues K264–K280 carry the Bipartite nuclear localization signal motif. Disordered regions lie at residues R270–I305, T354–L374, and H405–N458. The span at Q363–G372 shows a compositional bias: acidic residues. Residues N438–N458 show a composition bias toward low complexity.

Ubiquitous.

The protein localises to the nucleus. Trans-acting factor that binds specifically to the consensus nucleotide sequence 5'-TNCGTACAA-3'. The polypeptide is Squamosa promoter-binding-like protein 5 (SPL5) (Oryza sativa subsp. japonica (Rice)).